The primary structure comprises 348 residues: Outer membrane protein A (348 aa).

The N-terminal stretch at 1–21 is a signal peptide; sequence MKKTAIAIAVALAGFATVAQA. Beta stranded transmembrane passes span 27–37, 55–66, 70–78, 96–107, 112–120, 146–155, 160–167, and 186–194; these read TWYTGAKLGWS, QLGAGAFGGYQV, VGFEMGYDW, QGVQLTAKLGYP, LDIYTRLGG, PVFAGGVEYA, IATRLEYQ, and LLSLGVSYR. Residues 201–210 form a hinge-like region; sequence APVVAPAPAP. 3 repeat units span residues 205–206, 207–208, and 209–210. The segment at 205–210 is 3 X 2 AA tandem repeats of A-P; the sequence is APAPAP. The region spanning 212–340 is the OmpA-like domain; that stretch reads VQTKHFTLKS…RVEIEVKGIK (129 aa). Cys-313 and Cys-325 are disulfide-bonded.

It belongs to the outer membrane OOP (TC 1.B.6) superfamily. OmpA family. As to quaternary structure, monomer and homodimer. (Microbial infection) Upon infection with phage Sf6 associates with the mature bacteriophage capsid. Was originally suggested to be within the bacteriophage capsid. This has been disproven.

It is found in the extracellular vesicle. It localises to the cell outer membrane. In terms of biological role, with TolR probably plays a role in maintaining the position of the peptidoglycan cell wall in the periplasm. Acts as a porin with low permeability that allows slow penetration of small solutes; an internal gate slows down solute passage. Required for conjugation with F-type plasmids; probably serves as the mating receptor on recipient cells. Functionally, (Microbial infection) Serves as a secondary receptor during phage Sf6 infection; infection requires both lipopolysaccharide (LPS) and the OmpA beta-barrel. This Shigella flexneri protein is Outer membrane protein A.